Consider the following 147-residue polypeptide: MSQRVSYYEIAPEGMKIMMDMEKYTKQSSINRTTRELIKIRVSQMNGCAFCIDMHTSDARKMGETEQRIYCLHAWNECDFYSPEEKAALELSEHITLIPSKRVPDELYHRVREHYDEEQYVDLVLIINQINSWNRISIAMGNRAASK.

This is an uncharacterized protein from Bacillus subtilis (strain 168).